The primary structure comprises 308 residues: MKPRFDIIRASRWFFLLSGAITVAGVIVFALFGFNLSTDFKSGSEVQFELNQRVPEARVRQMFASIGLPLGDTSLTVGGIQQNVVMVTLPEQLTAKQISEIQAAEHRFFPDAKQDIQVNSVDPFVAEQTARKAVYAVLAAAACIVVYIAIRFEFRFAISGIIALLHDAFIVLAAFALLRREVDLTFVAALLTIVGYSINDTIVIFDRIRENLKIDKPETVDELRAVVNKSLWQVMNRSIRTVLTVLIAAVILYFFGGISIRNFTFALIIGLVSGAYSSIFIASPIWVAWRSRSMKKATRGDKAAPIPE.

The next 6 helical transmembrane spans lie at 14 to 34, 134 to 154, 158 to 178, 185 to 205, 238 to 258, and 267 to 287; these read FFLL…LFGF, VYAV…RFEF, ISGI…FALL, TFVA…IVIF, SIRT…FGGI, and LIIG…PIWV.

This sequence belongs to the SecD/SecF family. SecF subfamily. As to quaternary structure, forms a complex with SecD. Part of the essential Sec protein translocation apparatus which comprises SecA, SecYEG and auxiliary proteins SecDF. Other proteins may also be involved.

It is found in the cell membrane. In terms of biological role, part of the Sec protein translocase complex. Interacts with the SecYEG preprotein conducting channel. SecDF uses the proton motive force (PMF) to complete protein translocation after the ATP-dependent function of SecA. The protein is Protein translocase subunit SecF of Alicyclobacillus acidocaldarius subsp. acidocaldarius (strain ATCC 27009 / DSM 446 / BCRC 14685 / JCM 5260 / KCTC 1825 / NBRC 15652 / NCIMB 11725 / NRRL B-14509 / 104-IA) (Bacillus acidocaldarius).